The primary structure comprises 285 residues: Formamidopyrimidine-DNA glycosylase (285 aa).

Catalysis depends on P2, which acts as the Schiff-base intermediate with DNA. E3 acts as the Proton donor in catalysis. K61 functions as the Proton donor; for beta-elimination activity in the catalytic mechanism. 3 residues coordinate DNA: H102, R121, and K163. Residues 249 to 283 (NAYGQAGKPCARCGTPIARETFMNRGSHFCNRCQK) form an FPG-type zinc finger. R273 acts as the Proton donor; for delta-elimination activity in catalysis.

It belongs to the FPG family. In terms of assembly, monomer. Zn(2+) serves as cofactor.

It catalyses the reaction Hydrolysis of DNA containing ring-opened 7-methylguanine residues, releasing 2,6-diamino-4-hydroxy-5-(N-methyl)formamidopyrimidine.. The catalysed reaction is 2'-deoxyribonucleotide-(2'-deoxyribose 5'-phosphate)-2'-deoxyribonucleotide-DNA = a 3'-end 2'-deoxyribonucleotide-(2,3-dehydro-2,3-deoxyribose 5'-phosphate)-DNA + a 5'-end 5'-phospho-2'-deoxyribonucleoside-DNA + H(+). Involved in base excision repair of DNA damaged by oxidation or by mutagenic agents. Acts as a DNA glycosylase that recognizes and removes damaged bases. Has a preference for oxidized purines, such as 7,8-dihydro-8-oxoguanine (8-oxoG). Has AP (apurinic/apyrimidinic) lyase activity and introduces nicks in the DNA strand. Cleaves the DNA backbone by beta-delta elimination to generate a single-strand break at the site of the removed base with both 3'- and 5'-phosphates. This chain is Formamidopyrimidine-DNA glycosylase, found in Corynebacterium efficiens (strain DSM 44549 / YS-314 / AJ 12310 / JCM 11189 / NBRC 100395).